Here is a 239-residue protein sequence, read N- to C-terminus: Ribonuclease PH (239 aa).

Residues arginine 87 and 125-127 (GTR) each bind phosphate.

This sequence belongs to the RNase PH family. As to quaternary structure, homohexameric ring arranged as a trimer of dimers.

It carries out the reaction tRNA(n+1) + phosphate = tRNA(n) + a ribonucleoside 5'-diphosphate. In terms of biological role, phosphorolytic 3'-5' exoribonuclease that plays an important role in tRNA 3'-end maturation. Removes nucleotide residues following the 3'-CCA terminus of tRNAs; can also add nucleotides to the ends of RNA molecules by using nucleoside diphosphates as substrates, but this may not be physiologically important. Probably plays a role in initiation of 16S rRNA degradation (leading to ribosome degradation) during starvation. This chain is Ribonuclease PH, found in Syntrophomonas wolfei subsp. wolfei (strain DSM 2245B / Goettingen).